The chain runs to 388 residues: Succinate--CoA ligase [ADP-forming] subunit beta (388 aa).

Residues 9–244 (KQLFARYGLP…QSQEDPREAQ (236 aa)) form the ATP-grasp domain. Residues K46, 53 to 55 (GRG), E99, T102, and E107 contribute to the ATP site. Residues N199 and D213 each contribute to the Mg(2+) site. Residues N264 and 321 to 323 (GIV) each bind substrate.

It belongs to the succinate/malate CoA ligase beta subunit family. As to quaternary structure, heterotetramer of two alpha and two beta subunits. Mg(2+) serves as cofactor.

The enzyme catalyses succinate + ATP + CoA = succinyl-CoA + ADP + phosphate. It catalyses the reaction GTP + succinate + CoA = succinyl-CoA + GDP + phosphate. Its pathway is carbohydrate metabolism; tricarboxylic acid cycle; succinate from succinyl-CoA (ligase route): step 1/1. In terms of biological role, succinyl-CoA synthetase functions in the citric acid cycle (TCA), coupling the hydrolysis of succinyl-CoA to the synthesis of either ATP or GTP and thus represents the only step of substrate-level phosphorylation in the TCA. The beta subunit provides nucleotide specificity of the enzyme and binds the substrate succinate, while the binding sites for coenzyme A and phosphate are found in the alpha subunit. The chain is Succinate--CoA ligase [ADP-forming] subunit beta from Shigella dysenteriae serotype 1 (strain Sd197).